Reading from the N-terminus, the 157-residue chain is C-type lectin 9a (157 aa).

Residues 1–23 (MGRFIFVSFGLLVVFLSLSGTGA) form the signal peptide. 3 disulfides stabilise this stretch: cysteine 27/cysteine 38, cysteine 55/cysteine 151, and cysteine 126/cysteine 143. The C-type lectin domain maps to 34 to 152 (YDQYCYKPFN…CQAKKPFVCK (119 aa)).

This sequence belongs to the snaclec family. As to quaternary structure, heteromultimer; disulfide-linked. In terms of tissue distribution, expressed by the venom gland.

The protein resides in the secreted. Interferes with one step of hemostasis (modulation of platelet aggregation, or coagulation cascade, for example). In Crotalus adamanteus (Eastern diamondback rattlesnake), this protein is C-type lectin 9a.